Consider the following 288-residue polypeptide: Acetyl-coenzyme A carboxylase carboxyl transferase subunit beta (288 aa).

Residues 34–288 enclose the CoA carboxyltransferase N-terminal domain; sequence LFAKCPACKH…HLVAFHGGVS (255 aa). 4 residues coordinate Zn(2+): C38, C41, C56, and C59. The C4-type zinc-finger motif lies at 38–59; that stretch reads CPACKHMIYQKDLGPAKICPTC.

This sequence belongs to the AccD/PCCB family. Acetyl-CoA carboxylase is a heterohexamer composed of biotin carboxyl carrier protein (AccB), biotin carboxylase (AccC) and two subunits each of ACCase subunit alpha (AccA) and ACCase subunit beta (AccD). Zn(2+) serves as cofactor.

The protein resides in the cytoplasm. It carries out the reaction N(6)-carboxybiotinyl-L-lysyl-[protein] + acetyl-CoA = N(6)-biotinyl-L-lysyl-[protein] + malonyl-CoA. It participates in lipid metabolism; malonyl-CoA biosynthesis; malonyl-CoA from acetyl-CoA: step 1/1. Its function is as follows. Component of the acetyl coenzyme A carboxylase (ACC) complex. Biotin carboxylase (BC) catalyzes the carboxylation of biotin on its carrier protein (BCCP) and then the CO(2) group is transferred by the transcarboxylase to acetyl-CoA to form malonyl-CoA. The sequence is that of Acetyl-coenzyme A carboxylase carboxyl transferase subunit beta from Streptococcus equi subsp. zooepidemicus (strain H70).